The primary structure comprises 215 residues: Cytochrome b6 (215 aa).

A helical transmembrane segment spans residues 32 to 52 (IFYCLGGITLTCFLVQVATGF). Cys-35 contributes to the heme c binding site. The heme b site is built by His-86 and His-100. 3 consecutive transmembrane segments (helical) span residues 90-110 (ASMMVLMMILHVFRVYLTGGF), 116-136 (LTWVTGVILAVLTASFGVTGY), and 186-206 (LHTFVLPLLTAVFMLMHFSMI). Heme b-binding residues include His-187 and His-202.

This sequence belongs to the cytochrome b family. PetB subfamily. The 4 large subunits of the cytochrome b6-f complex are cytochrome b6, subunit IV (17 kDa polypeptide, PetD), cytochrome f and the Rieske protein, while the 4 small subunits are PetG, PetL, PetM and PetN. The complex functions as a dimer. Heme b is required as a cofactor. It depends on heme c as a cofactor.

The protein resides in the plastid. It is found in the chloroplast thylakoid membrane. Component of the cytochrome b6-f complex, which mediates electron transfer between photosystem II (PSII) and photosystem I (PSI), cyclic electron flow around PSI, and state transitions. The sequence is that of Cytochrome b6 from Piper cenocladum (Ant piper).